A 131-amino-acid chain; its full sequence is C-type natriuretic peptide 1 (131 aa).

The first 22 residues, 1-22, serve as a signal peptide directing secretion; sequence MLYPALLCAALLLIAPLGHTEG. Positions 23-109 are excised as a propeptide; sequence RTLHPSPDAI…KRAVMDRSRR (87 aa). A disulfide bridge links Cys115 with Cys131.

Belongs to the natriuretic peptide family. In terms of tissue distribution, expressed in brain and to a low extent in atrium.

It is found in the secreted. Functionally, exhibits natriuretic and vasodepressant activity. Has a cGMP-stimulating activity. This is C-type natriuretic peptide 1 from Oncorhynchus mykiss (Rainbow trout).